The sequence spans 307 residues: tRNA pseudouridine synthase B (307 aa).

The active-site Nucleophile is the D38.

This sequence belongs to the pseudouridine synthase TruB family. Type 1 subfamily.

The enzyme catalyses uridine(55) in tRNA = pseudouridine(55) in tRNA. Responsible for synthesis of pseudouridine from uracil-55 in the psi GC loop of transfer RNAs. In Bacillus cereus (strain ZK / E33L), this protein is tRNA pseudouridine synthase B.